The following is a 753-amino-acid chain: 5-methyltetrahydropteroyltriglutamate--homocysteine methyltransferase (753 aa).

Residues 17–20 (RELK) and K117 each bind 5-methyltetrahydropteroyltri-L-glutamate. L-homocysteine-binding positions include 431-433 (IGS) and E484. Residues 431 to 433 (IGS) and E484 each bind L-methionine. 5-methyltetrahydropteroyltri-L-glutamate contacts are provided by residues 515–516 (RC) and W561. Residue D599 coordinates L-homocysteine. An L-methionine-binding site is contributed by D599. Residue E605 coordinates 5-methyltetrahydropteroyltri-L-glutamate. Zn(2+) is bound by residues H641, C643, and E665. H694 functions as the Proton donor in the catalytic mechanism. Position 726 (C726) interacts with Zn(2+).

Belongs to the vitamin-B12 independent methionine synthase family. The cofactor is Zn(2+).

The catalysed reaction is 5-methyltetrahydropteroyltri-L-glutamate + L-homocysteine = tetrahydropteroyltri-L-glutamate + L-methionine. The protein operates within amino-acid biosynthesis; L-methionine biosynthesis via de novo pathway; L-methionine from L-homocysteine (MetE route): step 1/1. Its function is as follows. Catalyzes the transfer of a methyl group from 5-methyltetrahydrofolate to homocysteine resulting in methionine formation. The chain is 5-methyltetrahydropteroyltriglutamate--homocysteine methyltransferase from Shigella flexneri.